The following is a 343-amino-acid chain: Plasminogen (343 aa).

2 Kringle domains span residues 1-17 and 41-120; these read APQAPSVENPPEADCML and AQEP…GCVA. Residues 1–140 are plasmin heavy chain A; that stretch reads APQAPSVENP…LRRRSREHFC (140 aa). 3 cysteine pairs are disulfide-bonded: Cys-15-Cys-94, Cys-36-Cys-77, and Cys-65-Cys-89. In terms of domain architecture, Peptidase S1 spans 114 to 341; that stretch reads VVGGCVATPH…YVPWIEETMR (228 aa). A Phosphoserine modification is found at Ser-130. Cys-140 and Cys-156 are joined by a disulfide. Residues 141–343 form a plasmin light chain B region; it reads GGTLISPEWV…PWIEETMRRY (203 aa). Catalysis depends on charge relay system residues His-155 and Asp-198. Ser-221 carries the phosphoserine modification. 3 cysteine pairs are disulfide-bonded: Cys-232–Cys-299, Cys-262–Cys-278, and Cys-289–Cys-317. Ser-293 (charge relay system) is an active-site residue.

This sequence belongs to the peptidase S1 family. Plasminogen subfamily. In terms of assembly, interacts with CSPG4 and AMOT. Interacts (via the Kringle domains) with HRG; the interaction tethers PLG to the cell surface and enhances its activation. Interacts (via Kringle 4 domain) with ADA; the interaction stimulates PLG activation when in complex with DPP4. Angiostatin: Interacts with ATP5F1A; the interaction inhibits most of the angiogenic effects of angiostatin.

It localises to the secreted. The enzyme catalyses Preferential cleavage: Lys-|-Xaa &gt; Arg-|-Xaa, higher selectivity than trypsin. Converts fibrin into soluble products.. Converted into plasmin by plasminogen activators, both plasminogen and its activator being bound to fibrin. Cannot be activated with streptokinase. In terms of biological role, plasmin dissolves the fibrin of blood clots and acts as a proteolytic factor in a variety of other processes including embryonic development, tissue remodeling, tumor invasion, and inflammation. In ovulation, weakens the walls of the Graafian follicle. It activates the urokinase-type plasminogen activator, collagenases and several complement zymogens, such as C1, C4 and C5. Cleavage of fibronectin and laminin leads to cell detachment and apoptosis. Also cleaves fibrin, thrombospondin and von Willebrand factor. Its role in tissue remodeling and tumor invasion may be modulated by CSPG4. Binds to cells. This Ovis aries (Sheep) protein is Plasminogen (PLG).